The sequence spans 416 residues: UBX domain-containing protein 4 (416 aa).

A UBX domain is found at 273–350 (KAISECLLRV…EFGSKTMLLF (78 aa)). The interval 376-402 (TRTTPSVNTINKSNPQGPSDNATSIKK) is disordered. Polar residues predominate over residues 378–402 (TTPSVNTINKSNPQGPSDNATSIKK).

The protein resides in the nucleus. The protein localises to the cytoplasm. Functionally, involved in CDC48-dependent protein degradation through the ubiquitin/proteasome pathway. The protein is UBX domain-containing protein 4 (UBX4) of Saccharomyces cerevisiae (strain ATCC 204508 / S288c) (Baker's yeast).